Here is a 294-residue protein sequence, read N- to C-terminus: Cyclin-dependent kinase A-1 (294 aa).

The Protein kinase domain occupies 4–287 (YEKEEKIGEG…ARQALEHEYF (284 aa)). Residues 10–18 (IGEGTYGVV) and K33 each bind ATP. Phosphothreonine is present on T14. At Y15 the chain carries Phosphotyrosine. D127 (proton acceptor) is an active-site residue. Phosphothreonine; by CAK is present on T161.

The protein belongs to the protein kinase superfamily. CMGC Ser/Thr protein kinase family. CDC2/CDKX subfamily. Phosphorylated at Thr-161 by CDKD-1. In terms of tissue distribution, expressed in the dividing region of the root apex and in differentiated cells such as those in the sclerenchyma, pericycle and parenchyma of the central cylinder.

It carries out the reaction L-seryl-[protein] + ATP = O-phospho-L-seryl-[protein] + ADP + H(+). The enzyme catalyses L-threonyl-[protein] + ATP = O-phospho-L-threonyl-[protein] + ADP + H(+). The catalysed reaction is [DNA-directed RNA polymerase] + ATP = phospho-[DNA-directed RNA polymerase] + ADP + H(+). This chain is Cyclin-dependent kinase A-1 (CDKA-1), found in Oryza sativa subsp. japonica (Rice).